Reading from the N-terminus, the 137-residue chain is Cytochrome c2 (137 aa).

The signal sequence occupies residues methionine 1–alanine 21. Heme c contacts are provided by cysteine 34, cysteine 37, histidine 38, and methionine 117.

It belongs to the cytochrome c family. In terms of processing, binds 1 heme c group covalently per subunit.

Cytochrome c2 is found mainly in purple, non-sulfur, photosynthetic bacteria where it functions as the electron donor to the oxidized bacteriochlorophyll in the photophosphorylation pathway. However, it may also have a role in the respiratory chain and is found in some non-photosynthetic bacteria. The protein is Cytochrome c2 (cycA) of Rhodobacter capsulatus (strain ATCC BAA-309 / NBRC 16581 / SB1003).